Here is a 553-residue protein sequence, read N- to C-terminus: Rhodopsin kinase GRK7 (553 aa).

S36 is subject to Phosphoserine; by PKA. The 121-residue stretch at 56–176 folds into the RGS domain; sequence FHSLCEQQPI…VTSAFYDKFL (121 aa). In terms of domain architecture, Protein kinase spans 191 to 454; that stretch reads FTEFRVLGKG…SDDPRKHHFF (264 aa). Residues 197–205 and K220 each bind ATP; that span reads LGKGGFGEV. D316 (proton acceptor) is an active-site residue. Residues 455 to 520 enclose the AGC-kinase C-terminal domain; it reads KTINFPRLEA…GAVPIAWQEE (66 aa). At C550 the chain carries Cysteine methyl ester. A lipid anchor (S-geranylgeranyl cysteine) is attached at C550. Residues 551-553 constitute a propeptide, removed in mature form; it reads LLL.

This sequence belongs to the protein kinase superfamily. AGC Ser/Thr protein kinase family. GPRK subfamily. In terms of assembly, interacts (when prenylated) with PDE6D; this promotes release from membranes. In terms of processing, autophosphorylated in vitro at Ser-490. Phosphorylation at Ser-36 is regulated by light and activated by cAMP. Retinal cones, outer and inner segments.

It localises to the membrane. It carries out the reaction L-threonyl-[rhodopsin] + ATP = O-phospho-L-threonyl-[rhodopsin] + ADP + H(+). It catalyses the reaction L-seryl-[rhodopsin] + ATP = O-phospho-L-seryl-[rhodopsin] + ADP + H(+). Its activity is regulated as follows. Inhibited by phosphorylation of Ser-36. Its function is as follows. Retina-specific kinase involved in the shutoff of the photoresponse and adaptation to changing light conditions via cone opsin phosphorylation, including rhodopsin (RHO). The chain is Rhodopsin kinase GRK7 (GRK7) from Homo sapiens (Human).